The chain runs to 189 residues: Large ribosomal subunit protein uL6 (189 aa).

The protein belongs to the universal ribosomal protein uL6 family. In terms of assembly, part of the 50S ribosomal subunit.

Its function is as follows. This protein binds to the 23S rRNA, and is important in its secondary structure. It is located near the subunit interface in the base of the L7/L12 stalk, and near the tRNA binding site of the peptidyltransferase center. This chain is Large ribosomal subunit protein uL6, found in Phocaeicola vulgatus (strain ATCC 8482 / DSM 1447 / JCM 5826 / CCUG 4940 / NBRC 14291 / NCTC 11154) (Bacteroides vulgatus).